A 1120-amino-acid polypeptide reads, in one-letter code: Terminal uridylyltransferase 1 (1120 aa).

2 disordered regions span residues 1–156 and 196–221; these read MSKY…SAVE and AALI…PHTP. A compositionally biased stretch (polar residues) spans 7 to 16; that stretch reads LFNQGTKDGT. The segment covering 17–59 has biased composition (low complexity); the sequence is NASSGSEANSANITSSSAPASSTNTSSPTSSESAVVSPPASTS. Residues 60–70 are compositionally biased toward basic residues; that stretch reads PRRRLIHRRHG. Basic and acidic residues predominate over residues 90 to 103; that stretch reads NEEKHENFISDSVH. Over residues 118-128 the composition is skewed to polar residues; sequence LTTSGSETVMS. Composition is skewed to low complexity over residues 134–154 and 207–217; these read AFEA…STSA and SSAVSSSSSGS. Residues 222 to 253 form a C2H2-type; atypical zinc finger; sequence PRLFTCDMCLQYVSTSYEALEQHALDQHGDAL. Zn(2+) is bound by residues cysteine 227, cysteine 230, histidine 244, and histidine 249. UTP-binding positions include serine 330 and 341-344; that span reads SDID. Mg(2+) contacts are provided by aspartate 342 and aspartate 344. An RNA-binding site is contributed by arginine 390. Aspartate 548 provides a ligand contact to Mg(2+). UTP-binding positions include 555–559, lysine 580, lysine 584, and 598–599; these read GIRNS and SY. The PAP-associated domain maps to 659-697; that stretch reads GELLLGFFYYYAFEFDWVNHVVSLNRPGITTKASLGWDV. The tract at residues 750–1120 is important for catalytic activity and RNA binding; the sequence is GMMASSASAA…ARRVLRLLFR (371 aa). Positions 773-782 match the Nucleotide recognition motif (NRM) motif; that stretch reads IEDPYEENLN. The tract at residues 800–900 is involved in oligomerization; sequence YRGLLSLLKD…LLSDLEAAFL (101 aa). Positions 1047–1076 are disordered; that stretch reads PSTTTQGEDPLASGTCEQGGVSPSLPTGAP.

The protein belongs to the DNA polymerase type-B-like family. As to quaternary structure, homotetramer. Part of a 700kDa complex. Interacts with p45 and p50 RNA ligases. Mg(2+) is required as a cofactor. It depends on Mn(2+) as a cofactor.

It localises to the mitochondrion. The catalysed reaction is RNA(n) + UTP = RNA(n)-3'-uridine ribonucleotide + diphosphate. Zinc-binding is required for catalytic activity. Functionally, terminal uridylyltransferase which is involved in the post-transcriptional editing of mitochondrial RNA, a process involving the addition and deletion of uridine (U) nucleotides in the pre-mRNA. Specifically, catalyzes the addition of Us to the 3'-hydroxyl group of guided RNA (gRNA), with a preference for RNAs terminating in 6 Us, but also can add Us to RNAs terminating in 6 adenines (A), 6 cytosines (C), or 6 guanines (G). Can mediate RNA-independent UTP polymerization in vitro. Can mediate pyrophosphate-dependent degradation of synthetic RNA ending with U residues in vitro. The chain is Terminal uridylyltransferase 1 from Leishmania tarentolae (Sauroleishmania tarentolae).